The primary structure comprises 205 residues: Arginine exporter protein ArgO (205 aa).

6 helical membrane passes run 1 to 21 (MLAV…PLGP), 37 to 57 (LMVA…GIFG), 68 to 88 (LLAL…WGAF), 112 to 132 (VVTM…TFVV), 147 to 167 (WFAL…ALLA), and 182 to 202 (IINT…AWQG).

Belongs to the LysE/ArgO transporter (TC 2.A.75) family.

It is found in the cell inner membrane. It carries out the reaction L-arginine(in) = L-arginine(out). In terms of biological role, involved in the export of arginine. Important to control the intracellular level of arginine and the correct balance between arginine and lysine. In Serratia proteamaculans (strain 568), this protein is Arginine exporter protein ArgO.